The sequence spans 137 residues: Large ribosomal subunit protein uL16 (137 aa).

It belongs to the universal ribosomal protein uL16 family. In terms of assembly, part of the 50S ribosomal subunit.

In terms of biological role, binds 23S rRNA and is also seen to make contacts with the A and possibly P site tRNAs. The chain is Large ribosomal subunit protein uL16 from Acinetobacter baumannii (strain SDF).